Reading from the N-terminus, the 55-residue chain is ATP synthase F(0) complex subunit 8 (55 aa).

The chain crosses the membrane as a helical span at residues 7–29 (NPWFYIMLMSWLTFSLIIQPELL).

It belongs to the ATPase protein 8 family. As to quaternary structure, component of the ATP synthase complex composed at least of ATP5F1A/subunit alpha, ATP5F1B/subunit beta, ATP5MC1/subunit c (homooctomer), MT-ATP6/subunit a, MT-ATP8/subunit 8, ATP5ME/subunit e, ATP5MF/subunit f, ATP5MG/subunit g, ATP5MK/subunit k, ATP5MJ/subunit j, ATP5F1C/subunit gamma, ATP5F1D/subunit delta, ATP5F1E/subunit epsilon, ATP5PF/subunit F6, ATP5PB/subunit b, ATP5PD/subunit d, ATP5PO/subunit OSCP. ATP synthase complex consists of a soluble F(1) head domain (subunits alpha(3) and beta(3)) - the catalytic core - and a membrane F(0) domain - the membrane proton channel (subunits c, a, 8, e, f, g, k and j). These two domains are linked by a central stalk (subunits gamma, delta, and epsilon) rotating inside the F1 region and a stationary peripheral stalk (subunits F6, b, d, and OSCP).

The protein localises to the mitochondrion membrane. Its function is as follows. Subunit 8, of the mitochondrial membrane ATP synthase complex (F(1)F(0) ATP synthase or Complex V) that produces ATP from ADP in the presence of a proton gradient across the membrane which is generated by electron transport complexes of the respiratory chain. ATP synthase complex consist of a soluble F(1) head domain - the catalytic core - and a membrane F(1) domain - the membrane proton channel. These two domains are linked by a central stalk rotating inside the F(1) region and a stationary peripheral stalk. During catalysis, ATP synthesis in the catalytic domain of F(1) is coupled via a rotary mechanism of the central stalk subunits to proton translocation. In vivo, can only synthesize ATP although its ATP hydrolase activity can be activated artificially in vitro. Part of the complex F(0) domain. This is ATP synthase F(0) complex subunit 8 from Musophaga violacea (Violet turaco).